A 478-amino-acid chain; its full sequence is Transposase for insertion sequence element IS231E (478 aa).

Belongs to the transposase 11 family.

Functionally, involved in the transposition of the insertion sequence. In Bacillus thuringiensis subsp. finitimus, this protein is Transposase for insertion sequence element IS231E.